A 319-amino-acid polypeptide reads, in one-letter code: Annexin A4 (319 aa).

Thr7 is subject to Phosphothreonine. Ser12 carries the phosphoserine modification. Annexin repeat units lie at residues 14–85, 86–157, 169–241, and 245–316; these read FNAT…GMMT, PTVL…SLTA, ALVR…AIVK, and NKPA…ILCG. 3 positions are modified to N6-acetyllysine: Lys213, Lys293, and Lys300.

Belongs to the annexin family.

It is found in the zymogen granule membrane. Its function is as follows. Calcium/phospholipid-binding protein which promotes membrane fusion and is involved in exocytosis. This is Annexin A4 (Anxa4) from Rattus norvegicus (Rat).